Reading from the N-terminus, the 427-residue chain is Glutamate-1-semialdehyde 2,1-aminomutase (427 aa).

Lysine 265 carries the N6-(pyridoxal phosphate)lysine modification.

It belongs to the class-III pyridoxal-phosphate-dependent aminotransferase family. HemL subfamily. In terms of assembly, homodimer. The cofactor is pyridoxal 5'-phosphate.

It is found in the cytoplasm. The enzyme catalyses (S)-4-amino-5-oxopentanoate = 5-aminolevulinate. It functions in the pathway porphyrin-containing compound metabolism; protoporphyrin-IX biosynthesis; 5-aminolevulinate from L-glutamyl-tRNA(Glu): step 2/2. In Actinobacillus succinogenes (strain ATCC 55618 / DSM 22257 / CCUG 43843 / 130Z), this protein is Glutamate-1-semialdehyde 2,1-aminomutase.